A 1226-amino-acid chain; its full sequence is MKITFYMWASYCSILKKALDELKKEGVDVEYKIYSNRNPIDDEFLEDAKDYDLVFIYRTSSDDIDLEKIKKFNENVIVVAQDPNFWNSEKSAKCYLFITYGGLDNFKNMVLYLMGKDKDVVKHPFQGIYYRGKIYEELEEFLKDVEFNKKYTVGILFSRHYLVNDDMDVIEKLLNRLDKEFNVIPVFSYGAKCEDLNALGSGESVLKYFLKDDKPIIDALINLLSFPLGTVKDKANLNKISGVEILKKLDVPVFHPIMSYYKSYEDWKKDEQGLSADIGWTIALPEFEGVIEPIIIGTTENENGLEKKFGIEERIDKVVRRIKRWIELKYKPKKDRKVIFILHNNACASVEATVGSAAHLDSFQSVINIMKKLKEEGYYVENIPENGEELAQLIMQKKAISEFRWTTVNEIIAKGGYLYLMDEEEYYEYFNTLPENVKNKILETWGDLNGKDIPAGMIYKVNGKNKIVITGLKFGNVYVCVQPKRGCAGARCDGRVCKILHDPYCPPTHQYIASYKYFNDIADIIIHVGTHGTLEFLPGKNVGLSNECYPDICIGDIPHLYIYNSDNPPEGTIAKRRSYATIIDHMQTVMVDAFYEELETLDSYIEEYLKEMDASRRHQLEHLIVEEVKKTNLLKIKEKIEKIEKEGKIHENFKEIFDELRDILEMIKNSKCNDGMHIFGELPSGEKRVEFIKSILEAIFIQNNTMNSKRRGIAERSEAMHPGYPNRGLPPMEFEYKDKNLKKKVSDVLNGKSIEDKKLEEKIKDINERIEKSDEIGSLLRGIDAKYIEPGPSGLITRGNYDILPTGRNFYSLDPYRIPTKSAYRVGVLLAEKLINRYLEEEGRYPENIALYWMASDIMWADGEGMGMILYLLGVKPVYRGGRVVGLEVIPLEELGRPRIDVTIRVSGITRDMFPNCIELVDEAIMKVANLDEPLEMNFVKKHVVENLNKGLSFRESTFRIFCSPPGTYGNGVKYAVYASAWENDEDLKDAFIYWNSYAYGKDVYGKKAINAFENILKTVDLTFNKVVTDEYDLFGCCCYFGTHGGLTNAARVLKGEEVKAYYGDTRNPNNVEVRTLKEEIERVSLTKLLNPKWIEGMKRHGYKGAGDIAKRIGRVYGWSATTKEVENWIFDEIFNTFVKNEENRKFFKEHNIYALEEIARRLLEAYQRGLWKTTEGNIEELKRAYLEIEGDIEETYSSIADIGEFQGGSVDIDMIWKEKLMSNGR.

Belongs to the Mg-chelatase subunit H family.

This is an uncharacterized protein from Methanocaldococcus jannaschii (strain ATCC 43067 / DSM 2661 / JAL-1 / JCM 10045 / NBRC 100440) (Methanococcus jannaschii).